The chain runs to 447 residues: Argininosuccinate synthase (447 aa).

ATP is bound by residues 17–25 (AFSGGLDTS) and alanine 43. Tyrosine 99 is a binding site for L-citrulline. Glycine 129 and threonine 131 together coordinate ATP. Residues threonine 131, asparagine 135, and aspartate 136 each contribute to the L-aspartate site. Asparagine 135 contacts L-citrulline. Residue aspartate 136 coordinates ATP. L-citrulline-binding residues include arginine 139 and serine 192. ATP is bound at residue aspartate 194. L-citrulline is bound by residues threonine 201, glutamate 203, and glutamate 280.

It belongs to the argininosuccinate synthase family. Type 2 subfamily. In terms of assembly, homotetramer.

Its subcellular location is the cytoplasm. The enzyme catalyses L-citrulline + L-aspartate + ATP = 2-(N(omega)-L-arginino)succinate + AMP + diphosphate + H(+). It participates in amino-acid biosynthesis; L-arginine biosynthesis; L-arginine from L-ornithine and carbamoyl phosphate: step 2/3. The protein is Argininosuccinate synthase of Shigella dysenteriae serotype 1 (strain Sd197).